We begin with the raw amino-acid sequence, 64 residues long: Temporin-ALd (64 aa).

A signal peptide spans 1–22 (MFTMKKSLLLLFFLGTIHLSLC). A propeptide spanning residues 23–46 (EQERNAEEERRDDLGERQAEVEKR) is cleaved from the precursor. At L62 the chain carries Leucine amide.

Expressed by the skin glands.

The protein localises to the secreted. In terms of biological role, antimicrobial peptide with activity against Gram-positive and Gram-negative bacteria and against fungi. Has been tested against S.aureus (MIC=1.25 ug/mL), B.pumilus (MIC=2.5 ug/mL), B.cereus (MIC=15.0 ug/mL), E.coli (MIC=1.25 ug/mL), B.dysenteriae (MIC=5.0 ug/mL), A.cacoaceticus (MIC=15.0 ug/mL), P.aeruginosa (MIC=5.0 ug/mL) and C.albicans (MIC=1.25 ug/mL). Also shows a weak hemolytic activity. This Amolops loloensis (Lolokou Sucker Frog) protein is Temporin-ALd.